The chain runs to 686 residues: XK-related protein 5 (686 aa).

The next 5 membrane-spanning stretches (helical) occupy residues 33-53 (LLWG…QALS), 205-225 (HFWV…WLVA), 239-259 (LFNL…WDSP), 265-285 (VTFY…ATDF), and 297-317 (IAGV…YYSL). Disordered stretches follow at residues 339–387 (GDKT…PPEA), 448–468 (ALSA…LENS), and 490–592 (FASD…APFP). Over residues 340 to 359 (DKTERRDSPRATDLAGKRTE) the composition is skewed to basic and acidic residues. Composition is skewed to polar residues over residues 450–468 (SAQQ…LENS) and 490–509 (FASD…TQGE). A compositionally biased stretch (gly residues) spans 523–536 (QGKGTGGQQRGGEG). The segment covering 550–567 (VATSSQQEGSPATLQTAH) has biased composition (polar residues).

The protein belongs to the XK family.

It localises to the cell membrane. The chain is XK-related protein 5 from Homo sapiens (Human).